The chain runs to 325 residues: Pyruvate dehydrogenase E1 component subunit beta (325 aa).

Residue glutamate 60 coordinates thiamine diphosphate.

Heterodimer of an alpha and a beta chain. It depends on thiamine diphosphate as a cofactor.

The catalysed reaction is N(6)-[(R)-lipoyl]-L-lysyl-[protein] + pyruvate + H(+) = N(6)-[(R)-S(8)-acetyldihydrolipoyl]-L-lysyl-[protein] + CO2. Functionally, the pyruvate dehydrogenase complex catalyzes the overall conversion of pyruvate to acetyl-CoA and CO(2). It contains multiple copies of three enzymatic components: pyruvate dehydrogenase (E1), dihydrolipoamide acetyltransferase (E2) and lipoamide dehydrogenase (E3). This Staphylococcus epidermidis (strain ATCC 35984 / DSM 28319 / BCRC 17069 / CCUG 31568 / BM 3577 / RP62A) protein is Pyruvate dehydrogenase E1 component subunit beta (pdhB).